A 378-amino-acid chain; its full sequence is Cell surface mannoprotein MP65 (378 aa).

The N-terminal stretch at 1-32 (MLFKSFVTFTVLANALAAPLAHQHHQHKEEKR) is a signal peptide. The segment at 67-124 (VSVSVNTEPPQNHPTTTQDVASASTYPSSTDGSAASSSAAASSSSQAGSEPSGGVGSG) is disordered. The segment covering 72–93 (NTEPPQNHPTTTQDVASASTYP) has biased composition (polar residues). The segment covering 94 to 116 (SSTDGSAASSSAAASSSSQAGSE) has biased composition (low complexity). Glu316 functions as the Nucleophile in the catalytic mechanism.

The protein belongs to the glycosyl hydrolase 17 family. As to quaternary structure, component of a multiprotein complex of 250 kDa composed of at least HYR1, MP65, and PRA1. In terms of processing, glycosylated protein with a polysaccharide moiety composed exclusively of mannose and glucose at a ratio of 12.7 to 1. Contributes highly to the carbohydrate component of the matrix. Treatment with tunicamycin impairs glycosylation.

Its subcellular location is the secreted. It is found in the cell wall. Its function is as follows. Surface mannoprotein required for hyphal morphogenesis, surface adherence, and pathogenicity. Contributes in a high proportion to the carbohydrate component of the matrix due to high levels of glycosylation and may play important roles during biofilm development and maintenance. Acts as a major antigen target of host cell-mediated immune response. Induces extensive T-cell proliferation of human peripheral blood mononuclear cells. Facilitates host dendritic cells maturation and promotes cytokine production through its glycosylated portion while its protein core is essentially involved in induction of T-cell response. This chain is Cell surface mannoprotein MP65 (MP65), found in Candida albicans (strain SC5314 / ATCC MYA-2876) (Yeast).